Consider the following 210-residue polypeptide: Uridine kinase (210 aa).

An ATP-binding site is contributed by 13–20 (GGSGSGKT).

The protein belongs to the uridine kinase family.

Its subcellular location is the cytoplasm. The catalysed reaction is uridine + ATP = UMP + ADP + H(+). The enzyme catalyses cytidine + ATP = CMP + ADP + H(+). It participates in pyrimidine metabolism; CTP biosynthesis via salvage pathway; CTP from cytidine: step 1/3. Its pathway is pyrimidine metabolism; UMP biosynthesis via salvage pathway; UMP from uridine: step 1/1. The sequence is that of Uridine kinase from Oceanobacillus iheyensis (strain DSM 14371 / CIP 107618 / JCM 11309 / KCTC 3954 / HTE831).